The chain runs to 85 residues: MADTGKGSASASCNDRCGCPSPCPGGESCRCKMMSEASGGDQEHNTCPCGEHCGCNPCNCPKTQTQTSAKGCTCGEGCTCATCAA.

Residues 1 to 20 form a disordered region; that stretch reads MADTGKGSASASCNDRCGCP.

This sequence belongs to the metallothionein superfamily. Type 15 family. In terms of tissue distribution, expressed specifically in seeds.

The protein localises to the cytoplasm. The protein resides in the nucleus. It is found in the cell membrane. Its function is as follows. Metallothioneins have a high content of cysteine residues that bind various heavy metals. Functions as a metal chelator of copper (Cu) and zinc (Zn). Plays a role in storing and distributing Zn ion in seed. The protein is Metallothionein-like protein 4B (MT4B) of Arabidopsis thaliana (Mouse-ear cress).